Consider the following 134-residue polypeptide: ATP synthase epsilon chain, plastid (134 aa).

The protein belongs to the ATPase epsilon chain family. F-type ATPases have 2 components, CF(1) - the catalytic core - and CF(0) - the membrane proton channel. CF(1) has five subunits: alpha(3), beta(3), gamma(1), delta(1), epsilon(1). CF(0) has three main subunits: a, b and c.

The protein resides in the plastid membrane. Functionally, produces ATP from ADP in the presence of a proton gradient across the membrane. In Prototheca wickerhamii, this protein is ATP synthase epsilon chain, plastid.